A 489-amino-acid polypeptide reads, in one-letter code: UDP-N-acetylmuramoyl-L-alanyl-D-glutamate--2,6-diaminopimelate ligase (489 aa).

Serine 30 provides a ligand contact to UDP-N-acetyl-alpha-D-muramoyl-L-alanyl-D-glutamate. 108 to 114 lines the ATP pocket; that stretch reads GTNGKTT. UDP-N-acetyl-alpha-D-muramoyl-L-alanyl-D-glutamate-binding positions include asparagine 149, 150-151, serine 177, glutamine 183, and arginine 185; that span reads TT. N6-carboxylysine is present on lysine 217. Meso-2,6-diaminopimelate-binding positions include arginine 383, 407–410, glycine 459, and glutamate 463; that span reads DNPR. A Meso-diaminopimelate recognition motif motif is present at residues 407–410; that stretch reads DNPR.

This sequence belongs to the MurCDEF family. MurE subfamily. Requires Mg(2+) as cofactor. Post-translationally, carboxylation is probably crucial for Mg(2+) binding and, consequently, for the gamma-phosphate positioning of ATP.

It localises to the cytoplasm. The catalysed reaction is UDP-N-acetyl-alpha-D-muramoyl-L-alanyl-D-glutamate + meso-2,6-diaminopimelate + ATP = UDP-N-acetyl-alpha-D-muramoyl-L-alanyl-gamma-D-glutamyl-meso-2,6-diaminopimelate + ADP + phosphate + H(+). Its pathway is cell wall biogenesis; peptidoglycan biosynthesis. Functionally, catalyzes the addition of meso-diaminopimelic acid to the nucleotide precursor UDP-N-acetylmuramoyl-L-alanyl-D-glutamate (UMAG) in the biosynthesis of bacterial cell-wall peptidoglycan. In Geobacillus thermodenitrificans (strain NG80-2), this protein is UDP-N-acetylmuramoyl-L-alanyl-D-glutamate--2,6-diaminopimelate ligase.